The primary structure comprises 716 residues: Astellifadiene synthase (716 aa).

The interval 1 to 323 (MEFKYSTLID…SPRYYTDAKF (323 aa)) is terpene cyclase. Residue aspartate 92 participates in Mg(2+) binding. Substrate is bound by residues aspartate 92, 179 to 182 (RIYD), asparagine 223, 227 to 231 (SWEKE), and 316 to 317 (RY). The short motif at 92-96 (DDVID) is the DDXXD 1 element. Residues 223-231 (NDLVSWEKE) carry the NSE/DTE motif. The tract at residues 324-713 (SQRQLDWIKN…FQLKLILQFL (390 aa)) is prenyltransferase. Isopentenyl diphosphate-binding residues include lysine 436, arginine 439, and histidine 468. Mg(2+) contacts are provided by aspartate 475 and aspartate 479. A DDXXD 2 motif is present at residues 475-479 (DDVED). Residue arginine 484 coordinates dimethylallyl diphosphate. Isopentenyl diphosphate is bound at residue arginine 485. Dimethylallyl diphosphate-binding residues include lysine 562, threonine 563, glutamine 598, asparagine 605, lysine 615, and lysine 625.

The protein in the N-terminal section; belongs to the terpene synthase family. It in the C-terminal section; belongs to the FPP/GGPP synthase family. Hexamer. It depends on Mg(2+) as a cofactor.

It carries out the reaction isopentenyl diphosphate + (2E,6E)-farnesyl diphosphate = (2E,6E,10E)-geranylgeranyl diphosphate + diphosphate. The catalysed reaction is isopentenyl diphosphate + (2E,6E,10E)-geranylgeranyl diphosphate = (2E,6E,10E,14E)-geranylfarnesyl diphosphate + diphosphate. The enzyme catalyses (2E,6E,10E,14E)-geranylfarnesyl diphosphate = astellifadiene + diphosphate. It functions in the pathway secondary metabolite biosynthesis; terpenoid biosynthesis. Functionally, bifunctional terpene synthase that converts dimethylallyl diphosphate (DMAPP) and isopentenyl diphosphate (IPP) into astellifadiene. The C-terminal prenyltransferase (PT) domain of EvAS catalyzes formation of geranylfarnesyl pyrophosphate (GFPP), whereas the N-terminal terpene cyclase (TC) domain catalyzes the cyclization of GFPP to astellifadiene. This Emericella variicolor (Aspergillus stellatus) protein is Astellifadiene synthase.